The following is a 264-amino-acid chain: Apolipoprotein A-I (264 aa).

A signal peptide spans 1 to 18; the sequence is MKTVVLAVAVLFLTGSQA. 2 repeat units span residues 67–88 and 89–110. The 10 X approximate tandem repeats stretch occupies residues 67–264; it reads LNLLENWDTL…EEASKKLNAQ (198 aa). A Methionine sulfoxide modification is found at methionine 109. The stretch at 111–121 is one 3; half-length repeat; sequence KDLEEVKAKVQ. 5 consecutive repeat copies span residues 122–143, 144–165, 166–187, 188–207, and 208–229. Methionine 193 is modified (methionine sulfoxide). Residues 230 to 240 form a 9; half-length repeat; sequence PALEDLRQGLM. Methionine 240 carries the post-translational modification Methionine sulfoxide. Repeat 10 spans residues 241–264; that stretch reads PVFESFKTRIMSMVEEASKKLNAQ.

The protein belongs to the apolipoprotein A1/A4/E family. Homodimer. Interacts with APOA1BP and CLU. Component of a sperm activating protein complex (SPAP), consisting of APOA1, an immunoglobulin heavy chain, an immunoglobulin light chain and albumin. Interacts with NDRG1. Interacts with SCGB3A2. Interacts with NAXE and YJEFN3. Post-translationally, glycosylated. In terms of processing, palmitoylated. Phosphorylation sites are present in the extracellular medium. Major protein of plasma HDL, also found in chylomicrons.

The protein localises to the secreted. Participates in the reverse transport of cholesterol from tissues to the liver for excretion by promoting cholesterol efflux from tissues and by acting as a cofactor for the lecithin cholesterol acyltransferase (LCAT). As part of the SPAP complex, activates spermatozoa motility. This is Apolipoprotein A-I (APOAI) from Mesocricetus auratus (Golden hamster).